The primary structure comprises 494 residues: Protein DETOXIFICATION 22 (494 aa).

The next 12 helical transmembrane spans lie at 40 to 60 (LWVV…VSLV), 78 to 98 (ITFT…ASAL), 123 to 143 (IVLT…GPIL), 159 to 179 (IALW…CQIF), 188 to 208 (IIAY…WLLV), 217 to 237 (GAMT…LLYV), 268 to 288 (GGMV…TGNL), 299 to 319 (AICI…LAAV), 340 to 360 (IVAV…FLFL), 384 to 404 (LLAF…VAVG), 416 to 436 (LACY…VVGL), and 441 to 461 (VWIG…IMTL).

It belongs to the multi antimicrobial extrusion (MATE) (TC 2.A.66.1) family.

The protein localises to the membrane. This chain is Protein DETOXIFICATION 22, found in Arabidopsis thaliana (Mouse-ear cress).